An 86-amino-acid chain; its full sequence is Co-chaperonin GroES (86 aa).

It belongs to the GroES chaperonin family. Heptamer of 7 subunits arranged in a ring. Interacts with the chaperonin GroEL.

The protein localises to the cytoplasm. Functionally, together with the chaperonin GroEL, plays an essential role in assisting protein folding. The GroEL-GroES system forms a nano-cage that allows encapsulation of the non-native substrate proteins and provides a physical environment optimized to promote and accelerate protein folding. GroES binds to the apical surface of the GroEL ring, thereby capping the opening of the GroEL channel. The chain is Co-chaperonin GroES from Campylobacter jejuni subsp. doylei (strain ATCC BAA-1458 / RM4099 / 269.97).